Reading from the N-terminus, the 165-residue chain is MSHPALTQLRALRYFTEIPALEPQLLDWLLLEDSMTKRFEQQGKTVSVTMIREGFVEQNEIPEELPLLPKESRYWLREILLCADGEPWLAGRTVVPVSTLSGPELALQKLGKTPLGRYLFTSSTLTRDFIEIGRDAGLWGRRSRLRLSGKPLLLTELFLPASPLY.

Residues M35, R77, L115, and E156 each contribute to the substrate site.

Belongs to the UbiC family. Monomer.

Its subcellular location is the cytoplasm. The catalysed reaction is chorismate = 4-hydroxybenzoate + pyruvate. Its pathway is cofactor biosynthesis; ubiquinone biosynthesis. Removes the pyruvyl group from chorismate, with concomitant aromatization of the ring, to provide 4-hydroxybenzoate (4HB) for the ubiquinone pathway. The sequence is that of Chorismate pyruvate-lyase from Escherichia coli O127:H6 (strain E2348/69 / EPEC).